Reading from the N-terminus, the 842-residue chain is Probable cleavage and polyadenylation specificity factor subunit 2 (842 aa).

Residues 414–425 (AEETRIRMERAR) are compositionally biased toward basic and acidic residues. Disordered regions lie at residues 414–442 (AEET…DDIA) and 708–747 (METF…SIPI). The span at 432–441 (ESDDSDDDDI) shows a compositional bias: acidic residues. The segment covering 731–747 (SNGQSKENDENASSIPI) has biased composition (polar residues).

Belongs to the metallo-beta-lactamase superfamily. RNA-metabolizing metallo-beta-lactamase-like family. CPSF2/YSH1 subfamily. CPSF is a heterotetramer composed of four distinct subunits 160, 100, 70 and 30 kDa.

The protein localises to the nucleus. Functionally, CPSF plays a key role in pre-mRNA 3'-end formation, recognizing the AAUAAA signal sequence and interacting with poly(A)polymerase and other factors to bring about cleavage and poly(A) addition. This Caenorhabditis briggsae protein is Probable cleavage and polyadenylation specificity factor subunit 2.